The following is a 310-amino-acid chain: TLC domain-containing protein 2 (310 aa).

Transmembrane regions (helical) follow at residues 6–26 (LLVA…LQLL), 40–60 (NIFV…VGLW), 79–99 (VLVA…LWNQ), 117–137 (CLST…SLLL), 167–187 (ASLA…SLWL), and 194–214 (LSLA…SISI). The region spanning 33–227 (RDRWMWRNIF…IRILTKDILQ (195 aa)) is the TLC domain.

It belongs to the TLCD family.

The protein localises to the cell membrane. Functionally, regulates the composition and fluidity of the plasma membrane. Inhibits the incorporation of membrane-fluidizing phospholipids containing omega-3 long-chain polyunsaturated fatty acids (LCPUFA) and thereby promotes membrane rigidity. Does not appear to have any effect on LCPUFA synthesis. The chain is TLC domain-containing protein 2 (Tlcd2) from Mus musculus (Mouse).